A 282-amino-acid chain; its full sequence is Phosphatidylglycerol--prolipoprotein diacylglyceryl transferase (282 aa).

A run of 3 helical transmembrane segments spans residues 18 to 38, 56 to 76, and 89 to 109; these read IQVH…VALA, ILWA…IFQW, and IWDG…VVIL. An a 1,2-diacyl-sn-glycero-3-phospho-(1'-sn-glycerol)-binding site is contributed by arginine 137. Residues 237-257 form a helical membrane-spanning segment; sequence VIRVSQALSVVLFFGSIGLMI.

This sequence belongs to the Lgt family.

Its subcellular location is the cell membrane. It catalyses the reaction L-cysteinyl-[prolipoprotein] + a 1,2-diacyl-sn-glycero-3-phospho-(1'-sn-glycerol) = an S-1,2-diacyl-sn-glyceryl-L-cysteinyl-[prolipoprotein] + sn-glycerol 1-phosphate + H(+). The protein operates within protein modification; lipoprotein biosynthesis (diacylglyceryl transfer). In terms of biological role, catalyzes the transfer of the diacylglyceryl group from phosphatidylglycerol to the sulfhydryl group of the N-terminal cysteine of a prolipoprotein, the first step in the formation of mature lipoproteins. This is Phosphatidylglycerol--prolipoprotein diacylglyceryl transferase from Lactiplantibacillus plantarum (strain ATCC BAA-793 / NCIMB 8826 / WCFS1) (Lactobacillus plantarum).